Consider the following 1216-residue polypeptide: ATP-dependent helicase/nuclease subunit A (1216 aa).

The UvrD-like helicase ATP-binding domain maps to 26 to 488 (QKKTAEQIEA…IILKENFRSS (463 aa)). 47-54 (ASAGSGKT) is an ATP binding site. A UvrD-like helicase C-terminal domain is found at 515–802 (KHQLVFANTK…ELMTIHKSKG (288 aa)).

This sequence belongs to the helicase family. AddA subfamily. Heterodimer of AddA and AddB/RexB. It depends on Mg(2+) as a cofactor.

The catalysed reaction is Couples ATP hydrolysis with the unwinding of duplex DNA by translocating in the 3'-5' direction.. It carries out the reaction ATP + H2O = ADP + phosphate + H(+). Its function is as follows. The heterodimer acts as both an ATP-dependent DNA helicase and an ATP-dependent, dual-direction single-stranded exonuclease. Recognizes the chi site generating a DNA molecule suitable for the initiation of homologous recombination. The AddA nuclease domain is required for chi fragment generation; this subunit has the helicase and 3' -&gt; 5' nuclease activities. The protein is ATP-dependent helicase/nuclease subunit A of Streptococcus pneumoniae serotype 2 (strain D39 / NCTC 7466).